The following is a 152-amino-acid chain: Synaptobrevin (152 aa).

Polar residues predominate over residues 1 to 16 (MENNEAPSPSGSNNND). Residues 1-30 (MENNEAPSPSGSNNNDFPILPPPPNANDNY) are disordered. Residues 1 to 110 (MENNEAPSPS…KRKQWWANMK (110 aa)) are Cytoplasmic-facing. Residues 47-107 (KLQQTQAKVD…GKLKRKQWWA (61 aa)) form the v-SNARE coiled-coil homology domain. A helical; Anchor for type IV membrane protein transmembrane segment spans residues 111–130 (MMIILGVIAVVLLIIVLVSV). The Vesicular segment spans residues 131-152 (WPSSSDSGSGGGNKAITQAPPH). Residues 133 to 152 (SSSDSGSGGGNKAITQAPPH) are disordered.

It belongs to the synaptobrevin family. In terms of assembly, part of the SNARE core complex containing Snap25 and syntaxin. In terms of processing, ubiquitinated by gzl, regulating endocytic trafficking. In wing imaginal disks, ubiquitination by gzl promotes transcytosis of wingless (wg) to the basolateral surface. In terms of tissue distribution, not nervous system-specific; abundant in cells of the gut and Malpighian tubules.

Its subcellular location is the cytoplasmic vesicle. The protein localises to the secretory vesicle. The protein resides in the synaptic vesicle membrane. It is found in the cell membrane. In terms of biological role, involved in the targeting and/or fusion of transport vesicles to their target membrane. This chain is Synaptobrevin, found in Drosophila melanogaster (Fruit fly).